A 453-amino-acid chain; its full sequence is Ribosomal protein uS12 methylthiotransferase RimO (453 aa).

The MTTase N-terminal domain maps to 4-120 (TSVHIVSLGC…IADHLRVLME (117 aa)). Residues C13, C49, C83, C161, C165, and C168 each coordinate [4Fe-4S] cluster. The Radical SAM core domain maps to 147-377 (STPPYSAYLK…MEEQAVISHE (231 aa)). One can recognise a TRAM domain in the interval 380-450 (QTLVGSLQEV…DYDLFAEVIS (71 aa)).

The protein belongs to the methylthiotransferase family. RimO subfamily. [4Fe-4S] cluster serves as cofactor.

The protein resides in the cytoplasm. The catalysed reaction is L-aspartate(89)-[ribosomal protein uS12]-hydrogen + (sulfur carrier)-SH + AH2 + 2 S-adenosyl-L-methionine = 3-methylsulfanyl-L-aspartate(89)-[ribosomal protein uS12]-hydrogen + (sulfur carrier)-H + 5'-deoxyadenosine + L-methionine + A + S-adenosyl-L-homocysteine + 2 H(+). Its function is as follows. Catalyzes the methylthiolation of an aspartic acid residue of ribosomal protein uS12. The sequence is that of Ribosomal protein uS12 methylthiotransferase RimO from Syntrophus aciditrophicus (strain SB).